Consider the following 362-residue polypeptide: tRNA/tmRNA (uracil-C(5))-methyltransferase (362 aa).

S-adenosyl-L-methionine contacts are provided by Gln182, Tyr210, Asn215, Glu231, and Asp293. The active-site Nucleophile is Cys318. The active-site Proton acceptor is Glu352.

The protein belongs to the class I-like SAM-binding methyltransferase superfamily. RNA M5U methyltransferase family. TrmA subfamily.

The catalysed reaction is uridine(54) in tRNA + S-adenosyl-L-methionine = 5-methyluridine(54) in tRNA + S-adenosyl-L-homocysteine + H(+). It carries out the reaction uridine(341) in tmRNA + S-adenosyl-L-methionine = 5-methyluridine(341) in tmRNA + S-adenosyl-L-homocysteine + H(+). Functionally, dual-specificity methyltransferase that catalyzes the formation of 5-methyluridine at position 54 (m5U54) in all tRNAs, and that of position 341 (m5U341) in tmRNA (transfer-mRNA). In Neisseria gonorrhoeae (strain ATCC 700825 / FA 1090), this protein is tRNA/tmRNA (uracil-C(5))-methyltransferase.